Here is a 432-residue protein sequence, read N- to C-terminus: D-amino acid dehydrogenase (432 aa).

3–17 (VLVLGSGVIGTTTAY) is a binding site for FAD.

It belongs to the DadA oxidoreductase family. Requires FAD as cofactor.

It catalyses the reaction a D-alpha-amino acid + A + H2O = a 2-oxocarboxylate + AH2 + NH4(+). It participates in amino-acid degradation; D-alanine degradation; NH(3) and pyruvate from D-alanine: step 1/1. In terms of biological role, oxidative deamination of D-amino acids. This chain is D-amino acid dehydrogenase, found in Azotobacter vinelandii (strain DJ / ATCC BAA-1303).